Here is a 1209-residue protein sequence, read N- to C-terminus: Calcium-activated potassium channel subunit alpha-1 (1209 aa).

The span at 1-23 shows a compositional bias: gly residues; that stretch reads MANGGGGGGGSSGGGGGGGGGSG. Residues 1 to 61 are disordered; the sequence is MANGGGGGGG…SSSSSSSSSV (61 aa). The Extracellular portion of the chain corresponds to 1 to 86; that stretch reads MANGGGGGGG…VPCDSRGQRM (86 aa). A compositionally biased stretch (polar residues) spans 25–39; it reads RMSSNIHANNLSLDA. Over residues 40 to 60 the composition is skewed to low complexity; the sequence is SSSSSSSSSSSSSSSSSSSSS. Residues 87–107 traverse the membrane as a helical segment; the sequence is WWAFLASSMVTFFGGLFIILL. Topologically, residues 108–178 are cytoplasmic; that stretch reads WRTLKYLWTV…MISAQTLTGR (71 aa). S-palmitoyl cysteine attachment occurs at residues Cys118, Cys119, and Cys121. Residues 179 to 199 traverse the membrane as a helical segment; sequence VLVVLVFALSIGALVIYFIDS. Residues 200–214 lie on the Extracellular side of the membrane; it reads SNPIESCQNFYKDFT. A helical membrane pass occupies residues 215 to 235; it reads LQIDMAFNVFFLLYFGLRFIA. Residues 236–239 lie on the Cytoplasmic side of the membrane; it reads ANDK. The helical transmembrane segment at 240 to 260 threads the bilayer; it reads LWFWLEVNSVVDFFTVPPVFV. Residues 261–264 lie on the Extracellular side of the membrane; that stretch reads SVYL. A helical; Voltage-sensor membrane pass occupies residues 265-285; it reads NRSWLGLRFLRALRLIQFSEI. The Cytoplasmic portion of the chain corresponds to 286-300; the sequence is LQFLNILKTSNSIKL. A helical membrane pass occupies residues 301–321; the sequence is VNLLSIFISTWLTAAGFIHLV. The Extracellular portion of the chain corresponds to 322-335; the sequence is ENSGDPWENFQNNQ. An intramembrane region (pore-forming) is located at residues 336–358; the sequence is ALTYWECVYLLMVTMSTVGYGDV. The Selectivity for potassium signature appears at 352 to 355; that stretch reads TVGY. Over 359 to 367 the chain is Extracellular; it reads YAKTTLGRL. A helical transmembrane segment spans residues 368 to 388; the sequence is FMVFFILGGLAMFASYVPEII. The Cytoplasmic segment spans residues 389–1209; that stretch reads ELIGNRKKYG…KQNRKEMVYR (821 aa). The region spanning 407–549 is the RCK N-terminal 1 domain; that stretch reads RKHIVVCGHI…WNWKEGDDAI (143 aa). Mg(2+)-binding residues include Glu439, Gln462, and Glu464. Residues 556–576 are segment S7; sequence LGFIAQSCLAQGLSTMLANLF. Residues 613–633 form a segment S8 region; sequence LSFPTVCELCFVKLKLLMIAI. Position 670 is a phosphothreonine (Asp670). Lys672 carries the post-translational modification Phosphoserine. Positions 681–685 are heme-binding motif; that stretch reads CKACH. Residues 703 to 733 are disordered; sequence EDEQPPTLSPKKKQRNGGMRNSPNTSPKLMR. Thr709 carries the phosphothreonine modification. Ser711, Ser724, and Ser728 each carry phosphoserine. Positions 783-803 are segment S9; sequence VLSGHVVVCIFGDVSSALIGL. Positions 785-929 constitute an RCK N-terminal 2 domain; the sequence is SGHVVVCIFG…MDRSSPDNSP (145 aa). Thr916 is modified (phosphothreonine). Phosphoserine is present on residues Ser924 and Ser928. Positions 976–998 match the Calcium bowl motif; the sequence is TELVNDTNVQFLDQDDDDDPDTE. Positions 985, 988, 991, and 993 each coordinate Ca(2+). Positions 1005–1025 are segment S10; that stretch reads FACGTAFAVSVLDSLMSATYF. Residues 1159 to 1184 are compositionally biased toward low complexity; that stretch reads RASLSHSSHSSQSSSKKSSSVHSIPS. The tract at residues 1159–1209 is disordered; it reads RASLSHSSHSSQSSSKKSSSVHSIPSTANRPNRPKSRESRDKQNRKEMVYR. The span at 1193-1209 shows a compositional bias: basic and acidic residues; the sequence is KSRESRDKQNRKEMVYR. Residues Ser1194 and Ser1197 each carry the phosphoserine modification.

Belongs to the potassium channel family. Calcium-activated (TC 1.A.1.3) subfamily. KCa1.1/KCNMA1 sub-subfamily. As to quaternary structure, homotetramer; which constitutes the calcium-activated potassium channel. Interacts with beta subunits KCNMB1, KCNMB2, KCNMB3 and KCNMB4. Interacts with gamma subunits LRRC26, LRRC38, LRRC52 and LRRC55. Beta and gamma subunits are accessory, and modulate its activity. Interacts with RAB11B. Post-translationally, phosphorylated. Phosphorylation by kinases such as PKA and/or PKG. In smooth muscles, phosphorylation affects its activity. In terms of processing, palmitoylation by ZDHHC22 and ZDHHC23 within the intracellular linker between the S0 and S1 transmembrane domains regulates localization to the plasma membrane. Depalmitoylated by LYPLA1 and LYPLAL1, leading to retard exit from the trans-Golgi network.

It is found in the cell membrane. It catalyses the reaction K(+)(in) = K(+)(out). Ethanol and carbon monoxide-bound heme increase channel activation. Heme inhibits channel activation. Functionally, potassium channel activated by both membrane depolarization or increase in cytosolic Ca(2+) that mediates export of K(+). It is also activated by the concentration of cytosolic Mg(2+). Its activation dampens the excitatory events that elevate the cytosolic Ca(2+) concentration and/or depolarize the cell membrane. It therefore contributes to repolarization of the membrane potential. Plays a key role in controlling excitability in a number of systems, such as regulation of the contraction of smooth muscle, the tuning of hair cells in the cochlea, regulation of transmitter release, and innate immunity. In smooth muscles, its activation by high level of Ca(2+), caused by ryanodine receptors in the sarcoplasmic reticulum, regulates the membrane potential. In cochlea cells, its number and kinetic properties partly determine the characteristic frequency of each hair cell and thereby helps to establish a tonotopic map. Kinetics of KCNMA1 channels are determined by alternative splicing, phosphorylation status and its combination with modulating beta subunits. Highly sensitive to both iberiotoxin (IbTx) and charybdotoxin (CTX). Its function is as follows. Potassium channel activated by both membrane depolarization or increase in cytosolic Ca(2+) that mediates export of K(+). In Mus musculus (Mouse), this protein is Calcium-activated potassium channel subunit alpha-1 (Kcnma1).